An 81-amino-acid chain; its full sequence is Protein K6 (81 aa).

The protein belongs to the poxviridae K6 protein family.

This is Protein K6 from Homo sapiens (Human).